The chain runs to 390 residues: Serine/threonine/tyrosine-protein kinase HT1 (390 aa).

The Protein kinase domain occupies 86–359 (LFIGNKFASG…GLPLTSHASL (274 aa)). ATP contacts are provided by residues 92-100 (FASGAHSRI) and K113. D212 functions as the Proton acceptor in the catalytic mechanism.

It belongs to the protein kinase superfamily. Ser/Thr protein kinase family. Interacts with DTX56. Binds to MPK4 and MPK12. Associates to CBC1 and CBC2. Autophosphorylated. Mainly localizes in guard cells. Expressed at low level in leaves, stems, roots and flowers.

It localises to the cell membrane. The catalysed reaction is L-seryl-[protein] + ATP = O-phospho-L-seryl-[protein] + ADP + H(+). The enzyme catalyses L-threonyl-[protein] + ATP = O-phospho-L-threonyl-[protein] + ADP + H(+). It catalyses the reaction L-tyrosyl-[protein] + ATP = O-phospho-L-tyrosyl-[protein] + ADP + H(+). With respect to regulation, inhibited by MPK4 and MPK12. Serine/threonine/tyrosine kinase involved in the control of stomatal movement in response to CO(2). Functions as a major negative regulator of CO(2)-induced stomatal closing. Does not seem to be involved in stomatal closure in response to abscisic acid (ABA) or light. Involved in the control of red light-induced stomatal opening. Is epistatic to SRK2E/OST1 function during stomatal responses to red light and altered CO(2). Phosphorylates SRK2E/OST1 and GHR1 to prevents SRK2E/OST1- and GHR1-induced activation of SLAC1, thus preventing stomatal closure. Mediates the phosphorylation of CBC1 and CBC2. This is Serine/threonine/tyrosine-protein kinase HT1 from Arabidopsis thaliana (Mouse-ear cress).